Here is a 396-residue protein sequence, read N- to C-terminus: 1-deoxy-D-xylulose 5-phosphate reductoisomerase (396 aa).

6 residues coordinate NADPH: Thr15, Gly16, Ser17, Ile18, Gly41, and Asn130. Lys131 serves as a coordination point for 1-deoxy-D-xylulose 5-phosphate. Glu132 serves as a coordination point for NADPH. Asp155 is a binding site for Mn(2+). The 1-deoxy-D-xylulose 5-phosphate site is built by Ser156, Glu157, Ser181, and His204. Residue Glu157 coordinates Mn(2+). Gly210 is an NADPH binding site. Ser217, Asn222, Lys223, and Glu226 together coordinate 1-deoxy-D-xylulose 5-phosphate. Residue Glu226 coordinates Mn(2+).

Belongs to the DXR family. The cofactor is Mg(2+). Mn(2+) is required as a cofactor.

It catalyses the reaction 2-C-methyl-D-erythritol 4-phosphate + NADP(+) = 1-deoxy-D-xylulose 5-phosphate + NADPH + H(+). Its pathway is isoprenoid biosynthesis; isopentenyl diphosphate biosynthesis via DXP pathway; isopentenyl diphosphate from 1-deoxy-D-xylulose 5-phosphate: step 1/6. In terms of biological role, catalyzes the NADPH-dependent rearrangement and reduction of 1-deoxy-D-xylulose-5-phosphate (DXP) to 2-C-methyl-D-erythritol 4-phosphate (MEP). This is 1-deoxy-D-xylulose 5-phosphate reductoisomerase from Bifidobacterium longum subsp. infantis (strain ATCC 15697 / DSM 20088 / JCM 1222 / NCTC 11817 / S12).